Reading from the N-terminus, the 468-residue chain is BTB and MATH domain-containing protein 45 (468 aa).

The region spanning 7–124 (VFELSHVFKD…DDSIIIEVLV (118 aa)) is the MATH domain. 2 consecutive BTB domains span residues 148–215 (SDGI…IDDD) and 304–368 (SDVI…IDDL).

The polypeptide is BTB and MATH domain-containing protein 45 (bath-45) (Caenorhabditis elegans).